The primary structure comprises 393 residues: S-adenosylmethionine synthase 1 (393 aa).

Glutamate 9 contacts Mg(2+). Histidine 15 contacts ATP. Glutamate 43 contributes to the K(+) binding site. The L-methionine site is built by glutamate 56 and glutamine 99. ATP is bound by residues 167-169 (DGK), 235-238 (SGRF), aspartate 246, 252-253 (RK), alanine 269, lysine 273, and lysine 277. Position 246 (aspartate 246) interacts with L-methionine. Lysine 277 serves as a coordination point for L-methionine.

The protein belongs to the AdoMet synthase family. In terms of assembly, homotetramer. Mn(2+) serves as cofactor. The cofactor is Mg(2+). Requires Co(2+) as cofactor. It depends on K(+) as a cofactor.

The protein resides in the cytoplasm. It carries out the reaction L-methionine + ATP + H2O = S-adenosyl-L-methionine + phosphate + diphosphate. The protein operates within amino-acid biosynthesis; S-adenosyl-L-methionine biosynthesis; S-adenosyl-L-methionine from L-methionine: step 1/1. Catalyzes the formation of S-adenosylmethionine from methionine and ATP. The reaction comprises two steps that are both catalyzed by the same enzyme: formation of S-adenosylmethionine (AdoMet) and triphosphate, and subsequent hydrolysis of the triphosphate. The protein is S-adenosylmethionine synthase 1 (METK1) of Solanum tuberosum (Potato).